The primary structure comprises 423 residues: 3-phosphoshikimate 1-carboxyvinyltransferase (423 aa).

3-phosphoshikimate is bound by residues Lys-21, Ser-22, and Arg-26. Lys-21 lines the phosphoenolpyruvate pocket. 2 residues coordinate phosphoenolpyruvate: Gly-93 and Arg-123. 6 residues coordinate 3-phosphoshikimate: Ser-168, Ser-169, Gln-170, Ser-196, Asp-311, and Lys-338. Gln-170 lines the phosphoenolpyruvate pocket. Asp-311 serves as the catalytic Proton acceptor. Residues Arg-342, Arg-383, and Lys-408 each contribute to the phosphoenolpyruvate site.

This sequence belongs to the EPSP synthase family. As to quaternary structure, monomer.

The protein resides in the cytoplasm. It carries out the reaction 3-phosphoshikimate + phosphoenolpyruvate = 5-O-(1-carboxyvinyl)-3-phosphoshikimate + phosphate. It participates in metabolic intermediate biosynthesis; chorismate biosynthesis. Catalyzes the transfer of the enolpyruvyl moiety of phosphoenolpyruvate (PEP) to the 5-hydroxyl of shikimate-3-phosphate (S3P) to produce enolpyruvyl shikimate-3-phosphate and inorganic phosphate. This chain is 3-phosphoshikimate 1-carboxyvinyltransferase, found in Methanosphaerula palustris (strain ATCC BAA-1556 / DSM 19958 / E1-9c).